A 276-amino-acid chain; its full sequence is MRALETIATLREYRKSLKESVGFVPTMGALHRGHQSLIERSLKENSHTIVSVFVNPTQFGANEDFSAYPRPLEKDLALCEKSGVNAVFAPKIGEMYPYEAKQRLKLYAPAFLSHSLEGAVRKGHFDGVVQVVLRLFHLTNPTRAYFGKKDAQQLLIIQHLVQDLLLDIEIAPCEIVRDSDNLALSSRNVCLNATERKQALAIPKALEKIQQAIDRGEKACEKLKKLGLEILKNLEVDYLECCNHKLEPLKTIEPANTLVLVAARVGKTRLLDNLWV.

27–34 (MGALHRGH) is an ATP binding site. H34 (proton donor) is an active-site residue. Q58 is a binding site for (R)-pantoate. Q58 serves as a coordination point for beta-alanine. Residue 147–150 (GKKD) coordinates ATP. Residue Q153 coordinates (R)-pantoate. ATP contacts are provided by residues V176 and 184–187 (LSSR).

Belongs to the pantothenate synthetase family. Homodimer.

It localises to the cytoplasm. The enzyme catalyses (R)-pantoate + beta-alanine + ATP = (R)-pantothenate + AMP + diphosphate + H(+). Its pathway is cofactor biosynthesis; (R)-pantothenate biosynthesis; (R)-pantothenate from (R)-pantoate and beta-alanine: step 1/1. Its function is as follows. Catalyzes the condensation of pantoate with beta-alanine in an ATP-dependent reaction via a pantoyl-adenylate intermediate. The sequence is that of Pantothenate synthetase from Helicobacter pylori (strain J99 / ATCC 700824) (Campylobacter pylori J99).